A 62-amino-acid polypeptide reads, in one-letter code: Large ribosomal subunit protein bL28 (62 aa).

The protein belongs to the bacterial ribosomal protein bL28 family.

The polypeptide is Large ribosomal subunit protein bL28 (Syntrophomonas wolfei subsp. wolfei (strain DSM 2245B / Goettingen)).